Here is a 198-residue protein sequence, read N- to C-terminus: Recombination protein RecR (198 aa).

The C4-type zinc finger occupies 57-72 (CPVCFNITDAERCDVC). Residues 80 to 173 (NLICVVEEPG…VVSRIAYGLP (94 aa)) enclose the Toprim domain.

It belongs to the RecR family.

May play a role in DNA repair. It seems to be involved in an RecBC-independent recombinational process of DNA repair. It may act with RecF and RecO. This Deinococcus deserti (strain DSM 17065 / CIP 109153 / LMG 22923 / VCD115) protein is Recombination protein RecR.